The following is a 370-amino-acid chain: Putative agmatine deiminase (370 aa).

Catalysis depends on cysteine 361, which acts as the Amidino-cysteine intermediate.

Belongs to the agmatine deiminase family.

The enzyme catalyses agmatine + H2O = N-carbamoylputrescine + NH4(+). The polypeptide is Putative agmatine deiminase (Shewanella putrefaciens (strain CN-32 / ATCC BAA-453)).